Reading from the N-terminus, the 39-residue chain is Glutenin, high molecular weight subunit PC237 (39 aa).

Belongs to the gliadin/glutenin family. As to quaternary structure, disulfide-bridge linked aggregates.

Its function is as follows. Glutenins are high-molecular weight seed storage proteins of wheat endosperm. Thought to be responsible for the visco-elastic property of wheat dough. The polypeptide is Glutenin, high molecular weight subunit PC237 (Triticum aestivum (Wheat)).